The following is a 381-amino-acid chain: Succinate--CoA ligase [ADP-forming] subunit beta (381 aa).

Residues 9–236 (KELLRVAGVP…ESSEAPSEVD (228 aa)) enclose the ATP-grasp domain. Residues Lys45, 52–54 (GRG), Ala94, and Glu99 contribute to the ATP site. Mg(2+)-binding residues include Asn191 and Asp205. Residues Asn256 and 313–315 (GIT) contribute to the substrate site.

This sequence belongs to the succinate/malate CoA ligase beta subunit family. As to quaternary structure, heterotetramer of two alpha and two beta subunits. The cofactor is Mg(2+).

It catalyses the reaction succinate + ATP + CoA = succinyl-CoA + ADP + phosphate. The catalysed reaction is GTP + succinate + CoA = succinyl-CoA + GDP + phosphate. It functions in the pathway carbohydrate metabolism; tricarboxylic acid cycle; succinate from succinyl-CoA (ligase route): step 1/1. Its function is as follows. Succinyl-CoA synthetase functions in the citric acid cycle (TCA), coupling the hydrolysis of succinyl-CoA to the synthesis of either ATP or GTP and thus represents the only step of substrate-level phosphorylation in the TCA. The beta subunit provides nucleotide specificity of the enzyme and binds the substrate succinate, while the binding sites for coenzyme A and phosphate are found in the alpha subunit. This is Succinate--CoA ligase [ADP-forming] subunit beta from Gemmatimonas aurantiaca (strain DSM 14586 / JCM 11422 / NBRC 100505 / T-27).